Reading from the N-terminus, the 466-residue chain is Minor capsid protein L2 (466 aa).

Positions 1–12 (MVSSRASRRKRA) match the Nuclear localization signal motif. A disulfide bridge links Cys21 with Cys27. The short motif at 447–455 (YFLKKRKRI) is the Nuclear localization signal element.

It belongs to the papillomaviridae L2 protein family. In terms of assembly, interacts with major capsid protein L1. Interacts with E2; this interaction inhibits E2 transcriptional activity but not the DNA replication function E2. Interacts with host GADD45GIP1. Interacts with host HSPA8; this interaction is required for L2 nuclear translocation. Interacts with host importins KPNB2 and KPNB3. Forms a complex with importin alpha2-beta1 heterodimers via interaction with the importin alpha2 adapter. Interacts with host DYNLT1; this interaction is essential for virus intracellular transport during entry. Interacts (via C-terminus) with host retromer subunits VPS35 and VPS29. Post-translationally, highly phosphorylated.

The protein localises to the virion. It is found in the host nucleus. Its subcellular location is the host early endosome. The protein resides in the host Golgi apparatus. Its function is as follows. Minor protein of the capsid that localizes along the inner surface of the virion, within the central cavities beneath the L1 pentamers. Plays a role in capsid stabilization through interaction with the major capsid protein L1. Once the virion enters the host cell, L2 escorts the genomic DNA into the nucleus by promoting escape from the endosomal compartments and traffic through the host Golgi network. Mechanistically, the C-terminus of L2 possesses a cell-penetrating peptide that protudes from the host endosome, interacts with host cytoplasmic retromer cargo and thereby mediates the capsid delivery to the host trans-Golgi network. Plays a role through its interaction with host dynein in the intracellular microtubule-dependent transport of viral capsid toward the nucleus. Mediates the viral genome import into the nucleus through binding to host importins. Once within the nucleus, L2 localizes viral genomes to host PML bodies in order to activate early gene expression for establishment of infection. Later on, promotes late gene expression by interacting with the viral E2 protein and by inhibiting its transcriptional activation functions. During virion assembly, encapsidates the genome by direct interaction with the viral DNA. The protein is Minor capsid protein L2 of Homo sapiens (Human).